The chain runs to 298 residues: GTP cyclohydrolase FolE2 (298 aa).

This sequence belongs to the GTP cyclohydrolase IV family.

The enzyme catalyses GTP + H2O = 7,8-dihydroneopterin 3'-triphosphate + formate + H(+). It functions in the pathway cofactor biosynthesis; 7,8-dihydroneopterin triphosphate biosynthesis; 7,8-dihydroneopterin triphosphate from GTP: step 1/1. Functionally, converts GTP to 7,8-dihydroneopterin triphosphate. The protein is GTP cyclohydrolase FolE2 of Xylella fastidiosa (strain 9a5c).